The chain runs to 315 residues: Olfactory receptor 3A10 (315 aa).

Residues 1-28 (MEPGAWGNRTAVTDFILLGLTGNVRLQP) are Extracellular-facing. Residue N8 is glycosylated (N-linked (GlcNAc...) asparagine). The helical transmembrane segment at 29–49 (ILFVVFFFAYIVTVGGNLSIL) threads the bilayer. At 50 to 68 (AAIFVEPKLHTPMYYFLGN) the chain is on the cytoplasmic side. Residues 69-89 (LSLLDIGCISVTVPPMLVCLL) form a helical membrane-spanning segment. The Extracellular segment spans residues 90–97 (AHECRVPY). Residues 98–118 (AACISQLFFFHLLAGVDCHLL) form a helical membrane-spanning segment. C100 and C192 are joined by a disulfide. At 119–145 (TAMAYDRYLAICQPLTYSTRMSREVQG) the chain is on the cytoplasmic side. A helical transmembrane segment spans residues 146-166 (TLVGICCTVSFINALTHTVAV). The Extracellular portion of the chain corresponds to 167–200 (SVLDFCGPNVVNHFYCDLPPLFQLSCSSIYLNGQ). The helical transmembrane segment at 201-221 (LLFVGATFMGVVPMILISVSY) threads the bilayer. At 222 to 239 (AHVAAAVLRIRSTEGRKK) the chain is on the cytoplasmic side. The helical transmembrane segment at 240–260 (AFSTCGSHLTVVCIFYGTGFF) threads the bilayer. Residues 261–274 (SYMRLGSVSASDKD) are Extracellular-facing. Residues 275 to 295 (KGIGILNTILSPMLNPLIYSL) form a helical membrane-spanning segment. Residues 296–315 (RNPDVQGALKRVLTGKRYPV) are Cytoplasmic-facing.

It belongs to the G-protein coupled receptor 1 family.

The protein localises to the cell membrane. Odorant receptor. The chain is Olfactory receptor 3A10 from Mus musculus (Mouse).